The sequence spans 378 residues: 1-acyl-sn-glycerol-3-phosphate acyltransferase delta (378 aa).

Residues 11–31 form a helical membrane-spanning segment; the sequence is FLCHLVFCYVFIASGLIINTI. Residues 96–101 carry the HXXXXD motif motif; it reads HKFEID. The next 3 membrane-spanning stretches (helical) occupy residues 125–145, 307–327, and 338–358; these read ELAY…VFCS, TLVN…QFLV, and LASF…MIGV.

Belongs to the 1-acyl-sn-glycerol-3-phosphate acyltransferase family.

It localises to the endoplasmic reticulum membrane. The catalysed reaction is a 1-acyl-sn-glycero-3-phosphate + an acyl-CoA = a 1,2-diacyl-sn-glycero-3-phosphate + CoA. The enzyme catalyses (4Z,7Z,10Z,13Z,16Z,19Z)-docosahexaenoyl-CoA + 1-hexadecanoyl-sn-glycero-3-phosphate = 1-hexadecanoyl-2-(4Z,7Z,10Z,13Z,16Z,19Z-docosahexaenoyl)-sn-glycero-3-phosphate + CoA. It catalyses the reaction 1-octadecanoyl-sn-glycero-3-phosphate + (9Z,12Z)-octadecadienoyl-CoA = 1-octadecanoyl-2-(9Z,12Z-octadecadienoyl)-sn-glycero-3-phosphate + CoA. It carries out the reaction 1-octadecanoyl-sn-glycero-3-phosphate + (4Z,7Z,10Z,13Z,16Z,19Z)-docosahexaenoyl-CoA = 1-octadecanoyl-2-(4Z,7Z,10Z,13Z,16Z,19Z-docosahexaenoyl)-sn-glycero-3-phosphate + CoA. The catalysed reaction is (4Z,7Z,10Z,13Z,16Z,19Z)-docosahexaenoyl-CoA + 1-(9Z-octadecenoyl)-sn-glycero-3-phosphate = 1-(9Z-octadecenoyl)-2-(4Z,7Z,10Z,13Z,16Z,19Z-docosahexaenoyl)-sn-glycero-3-phosphate + CoA. Its pathway is phospholipid metabolism; CDP-diacylglycerol biosynthesis; CDP-diacylglycerol from sn-glycerol 3-phosphate: step 2/3. Converts 1-acyl-sn-glycerol-3-phosphate (lysophosphatidic acid or LPA) into 1,2-diacyl-sn-glycerol-3-phosphate (phosphatidic acid or PA) by incorporating an acyl moiety at the sn-2 position of the glycerol backbone. Exhibits high acyl-CoA specificity for polyunsaturated fatty acyl-CoA, especially docosahexaenoyl-CoA (22:6-CoA, DHA-CoA). The chain is 1-acyl-sn-glycerol-3-phosphate acyltransferase delta (AGPAT4) from Pongo abelii (Sumatran orangutan).